Here is a 210-residue protein sequence, read N- to C-terminus: Ribosomal RNA large subunit methyltransferase E (210 aa).

S-adenosyl-L-methionine-binding residues include Gly60, Trp62, Asp80, Asp96, and Asp121. Lys161 serves as the catalytic Proton acceptor.

Belongs to the class I-like SAM-binding methyltransferase superfamily. RNA methyltransferase RlmE family.

The protein resides in the cytoplasm. The enzyme catalyses uridine(2552) in 23S rRNA + S-adenosyl-L-methionine = 2'-O-methyluridine(2552) in 23S rRNA + S-adenosyl-L-homocysteine + H(+). Functionally, specifically methylates the uridine in position 2552 of 23S rRNA at the 2'-O position of the ribose in the fully assembled 50S ribosomal subunit. The polypeptide is Ribosomal RNA large subunit methyltransferase E (Vesicomyosocius okutanii subsp. Calyptogena okutanii (strain HA)).